We begin with the raw amino-acid sequence, 567 residues long: Adenine deaminase (567 aa).

It belongs to the metallo-dependent hydrolases superfamily. Adenine deaminase family. Mn(2+) is required as a cofactor.

The catalysed reaction is adenine + H2O + H(+) = hypoxanthine + NH4(+). In Methanothrix thermoacetophila (strain DSM 6194 / JCM 14653 / NBRC 101360 / PT) (Methanosaeta thermophila), this protein is Adenine deaminase.